The primary structure comprises 306 residues: Oxygen-dependent coproporphyrinogen-III oxidase (306 aa).

Substrate is bound at residue Ser-93. Positions 97 and 107 each coordinate a divalent metal cation. The active-site Proton donor is the His-107. Asn-109–Arg-111 is a binding site for substrate. A divalent metal cation-binding residues include His-146 and His-176. Residues Tyr-241–Gly-276 form an important for dimerization region. Gly-259–Arg-261 is a substrate binding site.

Belongs to the aerobic coproporphyrinogen-III oxidase family. In terms of assembly, homodimer. Requires a divalent metal cation as cofactor.

It is found in the cytoplasm. The catalysed reaction is coproporphyrinogen III + O2 + 2 H(+) = protoporphyrinogen IX + 2 CO2 + 2 H2O. It functions in the pathway porphyrin-containing compound metabolism; protoporphyrin-IX biosynthesis; protoporphyrinogen-IX from coproporphyrinogen-III (O2 route): step 1/1. In terms of biological role, involved in the heme biosynthesis. Catalyzes the aerobic oxidative decarboxylation of propionate groups of rings A and B of coproporphyrinogen-III to yield the vinyl groups in protoporphyrinogen-IX. This is Oxygen-dependent coproporphyrinogen-III oxidase from Stutzerimonas stutzeri (strain A1501) (Pseudomonas stutzeri).